A 258-amino-acid polypeptide reads, in one-letter code: DNA repair protein RecO (258 aa).

It belongs to the RecO family.

Involved in DNA repair and RecF pathway recombination. This is DNA repair protein RecO from Oceanobacillus iheyensis (strain DSM 14371 / CIP 107618 / JCM 11309 / KCTC 3954 / HTE831).